The sequence spans 181 residues: Large ribosomal subunit protein uL6 (181 aa).

It belongs to the universal ribosomal protein uL6 family. Part of the 50S ribosomal subunit.

In terms of biological role, this protein binds to the 23S rRNA, and is important in its secondary structure. It is located near the subunit interface in the base of the L7/L12 stalk, and near the tRNA binding site of the peptidyltransferase center. This is Large ribosomal subunit protein uL6 from Coprothermobacter proteolyticus (strain ATCC 35245 / DSM 5265 / OCM 4 / BT).